Here is a 205-residue protein sequence, read N- to C-terminus: Fibroblast growth factor homolog (205 aa).

The first 17 residues, 1 to 17 (MHRLALVVATVAYLCAG), serve as a signal peptide directing secretion.

It belongs to the heparin-binding growth factors family.

The chain is Fibroblast growth factor homolog (FGF) from Orgyia pseudotsugata multicapsid polyhedrosis virus (OpMNPV).